A 238-amino-acid chain; its full sequence is Pyridoxine 5'-phosphate synthase (238 aa).

Asn-9 serves as a coordination point for 3-amino-2-oxopropyl phosphate. 11 to 12 provides a ligand contact to 1-deoxy-D-xylulose 5-phosphate; sequence DH. Arg-20 is a 3-amino-2-oxopropyl phosphate binding site. His-45 (proton acceptor) is an active-site residue. 2 residues coordinate 1-deoxy-D-xylulose 5-phosphate: Arg-47 and His-52. The active-site Proton acceptor is Glu-72. Thr-102 lines the 1-deoxy-D-xylulose 5-phosphate pocket. His-189 acts as the Proton donor in catalysis. Residues Gly-190 and 211 to 212 contribute to the 3-amino-2-oxopropyl phosphate site; that span reads GH.

It belongs to the PNP synthase family. As to quaternary structure, homooctamer; tetramer of dimers.

The protein localises to the cytoplasm. The catalysed reaction is 3-amino-2-oxopropyl phosphate + 1-deoxy-D-xylulose 5-phosphate = pyridoxine 5'-phosphate + phosphate + 2 H2O + H(+). Its pathway is cofactor biosynthesis; pyridoxine 5'-phosphate biosynthesis; pyridoxine 5'-phosphate from D-erythrose 4-phosphate: step 5/5. Catalyzes the complicated ring closure reaction between the two acyclic compounds 1-deoxy-D-xylulose-5-phosphate (DXP) and 3-amino-2-oxopropyl phosphate (1-amino-acetone-3-phosphate or AAP) to form pyridoxine 5'-phosphate (PNP) and inorganic phosphate. This is Pyridoxine 5'-phosphate synthase from Ehrlichia canis (strain Jake).